Here is a 310-residue protein sequence, read N- to C-terminus: MNSFAMLFPGQGSQYKNMLSSFFQKKNNLFKKIFDEASEYVNYNLLNLIKNGAKKKRDDYKYIQSAILTSSIAIYQLWKEKNGRRPALMSGHSLGEYSALVCANAIKFSDALKIVKLRSKLMQKIIINKPSLVQAIIGLDKVIIKNICLQYLPKIVSIASINSDDQIIISGEKLAVREVGLKCKKKGAKYVIKLNINTPIHSQLMKPVSEQIKYLLKSIKIKSPQIPVINNVDVICEKNEKKIKKALVRQFYSTVRWKEIIDLIKSKKIFTMLEIGPNKILSNLIKKNDNITVLNTNNLKNFLIAFKTIH.

Catalysis depends on residues Ser93 and His201.

The protein belongs to the FabD family.

The catalysed reaction is holo-[ACP] + malonyl-CoA = malonyl-[ACP] + CoA. It participates in lipid metabolism; fatty acid biosynthesis. This is Malonyl CoA-acyl carrier protein transacylase (fabD) from Buchnera aphidicola subsp. Schizaphis graminum (strain Sg).